We begin with the raw amino-acid sequence, 1675 residues long: Coadhesin (1675 aa).

The Extracellular segment spans residues 1 to 1356 (QGNYYSYGGT…TIADQADAAK (1356 aa)). In terms of domain architecture, F5/8 type C 1 spans 11-160 (TPGTPIGCTN…ICMRVGVESC (150 aa)). 7 consecutive TSP type-1 domains span residues 168–220 (NGAW…NDCV), 224–279 (NGGW…QFCP), 281–336 (DGGW…QCCP), 338–393 (HGGW…QTCP), 403–458 (NGNY…IPCP), 460–515 (NGNW…TACP), and 517–572 (DGGW…GPCP). 21 disulfides stabilise this stretch: Cys-180–Cys-216, Cys-184–Cys-219, Cys-194–Cys-206, Cys-236–Cys-273, Cys-240–Cys-278, Cys-251–Cys-263, Cys-293–Cys-330, Cys-297–Cys-335, Cys-308–Cys-320, Cys-350–Cys-387, Cys-354–Cys-392, Cys-365–Cys-377, Cys-415–Cys-452, Cys-419–Cys-457, Cys-430–Cys-442, Cys-472–Cys-509, Cys-476–Cys-514, Cys-487–Cys-499, Cys-528–Cys-566, Cys-532–Cys-571, and Cys-543–Cys-555. The tract at residues 567–588 (NKGPCPTSPPTISPPTTGSPAD) is disordered. VWFA domains lie at 595–769 (DLVF…MDRI), 778–958 (DIGF…FKAL), and 966–1141 (DLTF…ISII). The TSP type-1 8 domain maps to 1144–1198 (PSGLSKWSSWSACSKTCRYLGKAGTQIRTRDCKIPELGCDGMRIDTVECNKMDCE). Cystine bridges form between Cys-1156–Cys-1192, Cys-1160–Cys-1197, and Cys-1175–Cys-1182. The F5/8 type C 2 domain occupies 1192–1336 (CNKMDCEGCG…PCMQAAVFGC (145 aa)). The helical transmembrane segment at 1357–1377 (GILIVLWILAGILTFLLLMAC) threads the bilayer. The Cytoplasmic portion of the chain corresponds to 1378 to 1675 (CYYCCWHVCC…RGEEWYSRWG (298 aa)). The span at 1463-1480 (EKHVTAEDVKSEKPKYSE) shows a compositional bias: basic and acidic residues. The interval 1463–1491 (EKHVTAEDVKSEKPKYSEEASSGTIKSGS) is disordered. A compositionally biased stretch (polar residues) spans 1481–1491 (EASSGTIKSGS).

As to expression, component of the acid-insoluble and acid-soluble organic matrix of the aragonitic skeleton (at protein level).

Its subcellular location is the membrane. This Acropora millepora (Staghorn coral) protein is Coadhesin.